The following is a 219-amino-acid chain: Adenylate kinase (219 aa).

G13–T18 contacts ATP. The interval S33 to V62 is NMP. Residues T34, R39, N60–V62, G88–R91, and Q95 contribute to the AMP site. Positions G129 to D167 are LID. R130 contacts ATP. Zn(2+) contacts are provided by C133 and C136. T139–Y140 contributes to the ATP binding site. The Zn(2+) site is built by C153 and C156. 2 residues coordinate AMP: R164 and R175. ATP is bound at residue R203.

Belongs to the adenylate kinase family. In terms of assembly, monomer.

Its subcellular location is the cytoplasm. It carries out the reaction AMP + ATP = 2 ADP. Its pathway is purine metabolism; AMP biosynthesis via salvage pathway; AMP from ADP: step 1/1. Its function is as follows. Catalyzes the reversible transfer of the terminal phosphate group between ATP and AMP. Plays an important role in cellular energy homeostasis and in adenine nucleotide metabolism. The chain is Adenylate kinase from Lactiplantibacillus plantarum (strain ATCC BAA-793 / NCIMB 8826 / WCFS1) (Lactobacillus plantarum).